The following is a 348-amino-acid chain: Holliday junction branch migration complex subunit RuvB (348 aa).

Residues 4-186 (TDRIISANTA…FGIIQRLEFY (183 aa)) are large ATPase domain (RuvB-L). ATP is bound by residues Ile25, Arg26, Gly67, Lys70, Thr71, Thr72, 133-135 (EDY), Arg176, Tyr186, and Arg223. Thr71 is a Mg(2+) binding site. The segment at 187-257 (SIDDLSKIVY…IADKALSMLK (71 aa)) is small ATPAse domain (RuvB-S). A head domain (RuvB-H) region spans residues 260–348 (PVGFDHMDHR…SADQQQTLSI (89 aa)). DNA contacts are provided by Arg315 and Arg320.

Belongs to the RuvB family. In terms of assembly, homohexamer. Forms an RuvA(8)-RuvB(12)-Holliday junction (HJ) complex. HJ DNA is sandwiched between 2 RuvA tetramers; dsDNA enters through RuvA and exits via RuvB. An RuvB hexamer assembles on each DNA strand where it exits the tetramer. Each RuvB hexamer is contacted by two RuvA subunits (via domain III) on 2 adjacent RuvB subunits; this complex drives branch migration. In the full resolvosome a probable DNA-RuvA(4)-RuvB(12)-RuvC(2) complex forms which resolves the HJ.

The protein localises to the cytoplasm. It carries out the reaction ATP + H2O = ADP + phosphate + H(+). In terms of biological role, the RuvA-RuvB-RuvC complex processes Holliday junction (HJ) DNA during genetic recombination and DNA repair, while the RuvA-RuvB complex plays an important role in the rescue of blocked DNA replication forks via replication fork reversal (RFR). RuvA specifically binds to HJ cruciform DNA, conferring on it an open structure. The RuvB hexamer acts as an ATP-dependent pump, pulling dsDNA into and through the RuvAB complex. RuvB forms 2 homohexamers on either side of HJ DNA bound by 1 or 2 RuvA tetramers; 4 subunits per hexamer contact DNA at a time. Coordinated motions by a converter formed by DNA-disengaged RuvB subunits stimulates ATP hydrolysis and nucleotide exchange. Immobilization of the converter enables RuvB to convert the ATP-contained energy into a lever motion, pulling 2 nucleotides of DNA out of the RuvA tetramer per ATP hydrolyzed, thus driving DNA branch migration. The RuvB motors rotate together with the DNA substrate, which together with the progressing nucleotide cycle form the mechanistic basis for DNA recombination by continuous HJ branch migration. Branch migration allows RuvC to scan DNA until it finds its consensus sequence, where it cleaves and resolves cruciform DNA. The chain is Holliday junction branch migration complex subunit RuvB from Francisella tularensis subsp. tularensis (strain FSC 198).